Consider the following 858-residue polypeptide: MQEQYNPQDLEQKIQKHWDDNKTFVVTEDANKEKFYCLSMFPYPSGRLHMGHVRNYTIGDVVSRYQRLQGKNVMQPIGWDAFGLPAENAAVKNKTAPAPWTYENIEYMKNQLKLLGFGYDWNREFATCTPEYYRWEQEFFTKLYNKGLVYKKTSSVNWCPNDQTVLANEQVEDGCCWRCDTPVEQKKIPQWFIKITEYAQELLDDLDNLDGWPEMVKTMQRNWIGRSEGVELSFAVNGETSPLEVYTTRPDTLMGVTYVGIAAGHPLAEKASQNNPELAAFVEECRNTKVAEAELATMEKKGMDTGLRAIHPLNGREVPVFVANFVLMDYGTGAVMAVPAHDQRDFEFATKYGLDIIPVIKPEDGSDLDVSEAAYTEKGVLFDSGEFDGLAFQEAFDAIAAKLEAEGKGKKTVNFRLRDWGVSRQRYWGAPIPMVTTEDGEVHPVPADQLPVILPEDVVMDGVTSPIKADKEWAKTTFNGEPALRETDTFDTFMESSWYYARYCSPQADDILDPEKANYWLPVDQYIGGIEHACMHLLYSRFFHKLLRDAGYVTSDEPFKQLLCQGMVLADAFYYTNDKGGKEWVAPTDVTIERDGKGRIEKAIDDQGREVEHSGMIKMSKSKNNGIDPQEMVDKYGADTVRLFMMFASPADMTLEWQESGVEGANRFLKRVWKLVHEHTNKGTTEALDTSSLTGDQKALRRDVHKTIAKVSDDIGRRQTFNTAIAAIMELMNKLNKAPQESAQDRALLDEALKAVVAMLYPMTPHASFAMWEALGESDLDSATWPTFDENALVEDEKTIVVMINGKLRAKLVVAADATEEHVRELGLKDENAMKFLDGLTIRKVIYVPGKLLNIVAN.

The 'HIGH' region signature appears at 42–52 (PYPSGRLHMGH). The 'KMSKS' region signature appears at 618-622 (KMSKS). Lys-621 contacts ATP.

This sequence belongs to the class-I aminoacyl-tRNA synthetase family.

It is found in the cytoplasm. It carries out the reaction tRNA(Leu) + L-leucine + ATP = L-leucyl-tRNA(Leu) + AMP + diphosphate. The protein is Leucine--tRNA ligase of Aliivibrio fischeri (strain ATCC 700601 / ES114) (Vibrio fischeri).